Consider the following 327-residue polypeptide: Phenylalanine--tRNA ligase alpha subunit (327 aa).

Glutamate 252 is a Mg(2+) binding site.

It belongs to the class-II aminoacyl-tRNA synthetase family. Phe-tRNA synthetase alpha subunit type 1 subfamily. In terms of assembly, tetramer of two alpha and two beta subunits. It depends on Mg(2+) as a cofactor.

Its subcellular location is the cytoplasm. The enzyme catalyses tRNA(Phe) + L-phenylalanine + ATP = L-phenylalanyl-tRNA(Phe) + AMP + diphosphate + H(+). The protein is Phenylalanine--tRNA ligase alpha subunit of Erwinia tasmaniensis (strain DSM 17950 / CFBP 7177 / CIP 109463 / NCPPB 4357 / Et1/99).